The following is an 81-amino-acid chain: Small ribosomal subunit protein bS18A (81 aa).

It belongs to the bacterial ribosomal protein bS18 family. As to quaternary structure, part of the 30S ribosomal subunit. Forms a tight heterodimer with protein bS6.

In terms of biological role, binds as a heterodimer with protein bS6 to the central domain of the 16S rRNA, where it helps stabilize the platform of the 30S subunit. This Saccharopolyspora erythraea (strain ATCC 11635 / DSM 40517 / JCM 4748 / NBRC 13426 / NCIMB 8594 / NRRL 2338) protein is Small ribosomal subunit protein bS18A.